Here is a 60-residue protein sequence, read N- to C-terminus: MADESKFDQFKGNVKETVGNVTDNKELEKEGQQDKVIGKAKEVVENAKNKITDAIDKLKK.

This sequence belongs to the UPF0337 (CsbD) family.

The protein is UPF0337 protein SACOL1680 of Staphylococcus aureus (strain COL).